The primary structure comprises 1110 residues: Nitric oxide synthase 3 (1110 aa).

The segment at 1–74 (MGNFKSVGQE…PPEGPKFPRV (74 aa)) is disordered. Gly residues predominate over residues 15–27 (CGLGLGLGLGLCG). Low complexity predominate over residues 31-40 (PASPAPVSAS). Positions 47-69 (SSPPLPLPAPEHSPPLTRPPEGP) are enriched in pro residues. Residues C97 and C102 each contribute to the Zn(2+) site. Residues 101–489 (RCLGSLVFPR…PDPWKGSGTK (389 aa)) form an interaction with NOSIP region. S105 is a binding site for (6R)-L-erythro-5,6,7,8-tetrahydrobiopterin. S117 carries the post-translational modification Phosphoserine. A heme b-binding site is contributed by C187. Residues Q250, W359, Y360, and E364 each contribute to the L-arginine site. R368 serves as a coordination point for (6R)-L-erythro-5,6,7,8-tetrahydrobiopterin. Residue N369 coordinates L-arginine. Residues A449, W450, and F463 each coordinate (6R)-L-erythro-5,6,7,8-tetrahydrobiopterin. Y478 contacts heme b. A Phosphothreonine modification is found at T498. Positions 529, 530, 531, 533, 575, and 576 each coordinate FMN. Phosphoserine is present on residues S618, S636, and S641. FMN contacts are provided by S657, C664, E690, and Q694. R779 is an NADP(+) binding site. Residue H801 coordinates FAD. Residues 821–848 (EDPPPPAESVAVEQLEKGSPGGPPPGWV) are disordered. S839 is subject to Phosphoserine. The FAD site is built by R941, Y943, S944, T959, A961, Y965, V978, C979, and S980. NADP(+) contacts are provided by T1019, R1052, S1081, R1082, and K1088.

Belongs to the NOS family. In terms of assembly, homodimer. Interacts with NOSIP and NOSTRIN. Interacts with HSP90AB1. Forms a complex with ASL, ASS1 and SLC7A1; the complex regulates cell-autonomous L-arginine synthesis and citrulline recycling while channeling extracellular L-arginine to nitric oxide synthesis pathway. It depends on heme b as a cofactor. FAD is required as a cofactor. The cofactor is FMN. (6R)-L-erythro-5,6,7,8-tetrahydrobiopterin serves as cofactor.

The protein resides in the membrane. It is found in the caveola. Its subcellular location is the cytoplasm. It localises to the cytoskeleton. The protein localises to the golgi apparatus. The protein resides in the cell membrane. The catalysed reaction is 2 L-arginine + 3 NADPH + 4 O2 + H(+) = 2 L-citrulline + 2 nitric oxide + 3 NADP(+) + 4 H2O. With respect to regulation, stimulated by calcium/calmodulin. Inhibited by NOSIP and NOSTRIN. Its function is as follows. Produces nitric oxide (NO) which is implicated in vascular smooth muscle relaxation through a cGMP-mediated signal transduction pathway. NO mediates vascular endothelial growth factor (VEGF)-induced angiogenesis in coronary vessels and promotes blood clotting through the activation of platelets. This chain is Nitric oxide synthase 3 (NOS3), found in Cavia porcellus (Guinea pig).